Reading from the N-terminus, the 232-residue chain is CD302 antigen (232 aa).

An N-terminal signal peptide occupies residues 1 to 22; sequence MPRAAPPALLLPLLGLAAAAAA. At 23 to 168 the chain is on the extracellular side; it reads DCPSSTWVQF…YEKKYLSDNR (146 aa). Residues 32 to 152 form the C-type lectin domain; sequence FQDSCYIFLQ…CEVSSVEGTL (121 aa). N-linked (GlcNAc...) asparagine glycosylation occurs at Asn109. The cysteines at positions 128 and 143 are disulfide-linked. The helical transmembrane segment at 169-189 threads the bilayer; the sequence is ILISALVIASTVILTVLGAVV. The Cytoplasmic segment spans residues 190-232; sequence WFLYKRSLDSGFTTVFSAAHQSPYNDDCVLVVAEENEYDIQFN.

The protein localises to the membrane. It localises to the cell projection. Its subcellular location is the filopodium. The protein resides in the cytoplasm. It is found in the cell cortex. The protein localises to the microvillus. Potential multifunctional C-type lectin receptor that may play roles in endocytosis and phagocytosis as well as in cell adhesion and migration. The sequence is that of CD302 antigen from Bos taurus (Bovine).